We begin with the raw amino-acid sequence, 335 residues long: tRNA N6-adenosine threonylcarbamoyltransferase (335 aa).

Fe cation is bound by residues histidine 107 and histidine 111. Residues 129 to 133 (LVSGG), aspartate 162, glycine 175, and asparagine 268 contribute to the substrate site. Residue aspartate 296 coordinates Fe cation.

Belongs to the KAE1 / TsaD family. It depends on Fe(2+) as a cofactor.

The protein localises to the cytoplasm. It carries out the reaction L-threonylcarbamoyladenylate + adenosine(37) in tRNA = N(6)-L-threonylcarbamoyladenosine(37) in tRNA + AMP + H(+). Required for the formation of a threonylcarbamoyl group on adenosine at position 37 (t(6)A37) in tRNAs that read codons beginning with adenine. Is involved in the transfer of the threonylcarbamoyl moiety of threonylcarbamoyl-AMP (TC-AMP) to the N6 group of A37, together with TsaE and TsaB. TsaD likely plays a direct catalytic role in this reaction. The chain is tRNA N6-adenosine threonylcarbamoyltransferase from Campylobacter fetus subsp. fetus (strain 82-40).